The sequence spans 227 residues: Probable septum site-determining protein MinC (227 aa).

It belongs to the MinC family. Interacts with MinD and FtsZ.

Its function is as follows. Cell division inhibitor that blocks the formation of polar Z ring septums. Rapidly oscillates between the poles of the cell to destabilize FtsZ filaments that have formed before they mature into polar Z rings. Prevents FtsZ polymerization. This Geobacillus kaustophilus (strain HTA426) protein is Probable septum site-determining protein MinC.